Reading from the N-terminus, the 994-residue chain is Receptor-like protein 6 (994 aa).

Residues methionine 1–cysteine 25 form the signal peptide. Over asparagine 26–glutamate 946 the chain is Extracellular. 3 N-linked (GlcNAc...) asparagine glycosylation sites follow: asparagine 116, asparagine 134, and asparagine 154. LRR repeat units follow at residues leucine 122–lysine 146, methionine 148–leucine 171, leucine 174–histidine 199, phenylalanine 205–tyrosine 228, tryptophan 230–isoleucine 253, proline 254–asparagine 278, leucine 280–leucine 301, lysine 302–leucine 325, serine 326–leucine 349, lysine 350–leucine 373, glutamine 375–leucine 397, serine 398–isoleucine 421, serine 423–leucine 445, leucine 446–serine 471, serine 477–serine 497, serine 498–glutamine 520, arginine 521–leucine 544, glutamate 546–glycine 569, and lysine 571–tyrosine 595. N-linked (GlcNAc...) asparagine glycans are attached at residues asparagine 277 and asparagine 287. 3 N-linked (GlcNAc...) asparagine glycosylation sites follow: asparagine 420, asparagine 435, and asparagine 442. Asparagine 489 is a glycosylation site (N-linked (GlcNAc...) asparagine). N-linked (GlcNAc...) asparagine glycans are attached at residues asparagine 522, asparagine 554, and asparagine 561. The LRR 20; degenerate repeat unit spans residues leucine 597–glycine 613. A glycan (N-linked (GlcNAc...) asparagine) is linked at asparagine 602. LRR repeat units lie at residues leucine 614–alanine 637, methionine 639–alanine 663, valine 665–cysteine 687, alanine 689–serine 710, leucine 711–glycine 737, proline 739–asparagine 762, leucine 803–leucine 827, lysine 828–leucine 851, threonine 852–leucine 875, and serine 877–arginine 900. The N-linked (GlcNAc...) asparagine glycan is linked to asparagine 649. A glycan (N-linked (GlcNAc...) asparagine) is linked at asparagine 701. N-linked (GlcNAc...) asparagine glycosylation is present at asparagine 762. Asparagine 834 and asparagine 850 each carry an N-linked (GlcNAc...) asparagine glycan. N-linked (GlcNAc...) asparagine glycans are attached at residues asparagine 882 and asparagine 902. Residues leucine 947–methionine 967 traverse the membrane as a helical segment. At glycine 968 to arginine 994 the chain is on the cytoplasmic side.

This sequence belongs to the RLP family.

The protein localises to the cell membrane. The protein is Receptor-like protein 6 of Arabidopsis thaliana (Mouse-ear cress).